The chain runs to 397 residues: MNDVITQLLRGTHEVLRLEELQKRIESGKPLRIKAGFDPTAPDLHLGHTVLLNKLKQFQDLGHETIFLIGDFTGMIGDPTGKNVTRRPLTRDEVIENAKTYEEQIYKVLCPERTLVMFNSSWMNAMTSADLIQLAAKHTVARMLERDDFAKRYAGGQPISIHEFLYPLIQGYDSVALKADVELGGADQKFNLLVGRHLQEIYGQTPQVVMTMPILEGLDGIQKMSKSLGNYIGIADPPDDMFGKIMSISDDLMWRYYDLLSFAPLAEVARWRRECSEGANPRDVKVRLGQEIVERFHGASAARKALENFEARHRDNAVPDDLVEQVIAVPDGGYPIANLVHDLALTASTSEALRLIKQGGIKIDGERLEDPKCRMTAGGTHIIQVGKRKFAKIRLTP.

The 'HIGH' region signature appears at 39-48; it reads PTAPDLHLGH. Positions 223-227 match the 'KMSKS' region motif; the sequence is KMSKS. Lysine 226 serves as a coordination point for ATP. Residues 334 to 395 enclose the S4 RNA-binding domain; sequence YPIANLVHDL…GKRKFAKIRL (62 aa).

It belongs to the class-I aminoacyl-tRNA synthetase family. TyrS type 2 subfamily. As to quaternary structure, homodimer.

The protein resides in the cytoplasm. It carries out the reaction tRNA(Tyr) + L-tyrosine + ATP = L-tyrosyl-tRNA(Tyr) + AMP + diphosphate + H(+). Catalyzes the attachment of tyrosine to tRNA(Tyr) in a two-step reaction: tyrosine is first activated by ATP to form Tyr-AMP and then transferred to the acceptor end of tRNA(Tyr). This is Tyrosine--tRNA ligase from Methylococcus capsulatus (strain ATCC 33009 / NCIMB 11132 / Bath).